We begin with the raw amino-acid sequence, 528 residues long: Benzoylformate decarboxylase (528 aa).

Positions 117, 118, and 120 each coordinate Mg(2+). The tract at residues 377-460 (TSTTAQMWQR…VIMNNGTYGA (84 aa)) is thiamine pyrophosphate binding. Ca(2+) is bound by residues aspartate 428, asparagine 455, and threonine 457.

The protein belongs to the TPP enzyme family. In terms of assembly, homotetramer. Ca(2+) serves as cofactor. Thiamine diphosphate is required as a cofactor. Requires Mg(2+) as cofactor.

It carries out the reaction phenylglyoxylate + H(+) = benzaldehyde + CO2. It functions in the pathway aromatic compound metabolism; (R)-mandelate degradation; benzoate from (R)-mandelate: step 3/4. The protein is Benzoylformate decarboxylase (mdlC) of Pseudomonas putida (Arthrobacter siderocapsulatus).